Consider the following 1969-residue polypeptide: TP53-binding protein 1 (1969 aa).

The tract at residues 1–24 (MPGEQMDPTGSQLDSDFSQQDTPC) is disordered. A compositionally biased stretch (polar residues) spans 8 to 22 (PTGSQLDSDFSQQDT). Phosphoserine occurs at positions 30, 68, and 73. The tract at residues 67–168 (VSNPEQSAVE…DSLAAEDSAS (102 aa)) is disordered. Positions 69 to 85 (NPEQSAVEQGDSNSSFN) are enriched in polar residues. The span at 86–95 (EHLKEKKASD) shows a compositional bias: basic and acidic residues. Over residues 101-110 (HLGTSGSISQ) the composition is skewed to polar residues. S109 bears the Phosphoserine mark. The segment covering 135–148 (PEEEKEEEELEEEK) has biased composition (acidic residues). The segment covering 158–168 (ADSLAAEDSAS) has biased composition (low complexity). Residues S169, S179, and S181 each carry the phosphoserine modification. A Glycyl lysine isopeptide (Lys-Gly) (interchain with G-Cter in SUMO1); alternate cross-link involves residue K220. K220 participates in a covalent cross-link: Glycyl lysine isopeptide (Lys-Gly) (interchain with G-Cter in SUMO2); alternate. 3 disordered regions span residues 254–337 (EQNL…VSTP), 352–599 (LVQE…CKGR), and 614–707 (DSGS…CPEA). Phosphoserine occurs at positions 267 and 268. Residues 277 to 288 (ETKEQVPARELL) show a composition bias toward basic and acidic residues. Residues 294-324 (VQPSSEPEVSSTQEDLFDQSSKTASDGCSTP) show a composition bias toward polar residues. S297 carries the phosphoserine modification. T305 carries the phosphothreonine modification. A phosphoserine mark is found at S368, S382, and S397. The segment covering 407–419 (QKLHDDEAMETEK) has biased composition (basic and acidic residues). Residues 426 to 442 (PAVSPQASTPVSRSTPV) are compositionally biased toward polar residues. 3 positions are modified to phosphoserine: S429, S452, and S464. Residues 481–490 (HSSSLTVECS) show a composition bias toward polar residues. A compositionally biased stretch (basic and acidic residues) spans 491 to 501 (KTSESEPKNFT). Phosphoserine is present on residues S507, S518, S523, and S525. The segment covering 517 to 528 (LSTSEYSQSSKM) has biased composition (polar residues). Phosphothreonine occurs at positions 543 and 548. A phosphoserine mark is found at S552 and S579. The segment covering 566–582 (VLVTPSQDDQVEMSQNV) has biased composition (polar residues). The segment covering 583–599 (DKAKEDETEDRGDCKGR) has biased composition (basic and acidic residues). The span at 614-634 (DSGSQAVPSPATRSEALSSVL) shows a compositional bias: polar residues. A phosphoserine mark is found at S622, S627, S631, and S632. Basic and acidic residues predominate over residues 640 to 649 (MDTKEHHPEE). T662 is modified (phosphothreonine). Over residues 666 to 675 (SHREEPKEEP) the composition is skewed to basic and acidic residues. 4 positions are modified to phosphoserine: S684, S716, S719, and S763. The tract at residues 754–870 (KEPSPRADVS…DDKQLGPEGA (117 aa)) is disordered. A compositionally biased stretch (basic and acidic residues) spans 790–818 (AENRLDTPEEKRIECDGDSKAETTEKDAV). S822 carries the post-translational modification Phosphoserine. The segment covering 830 to 839 (VRDEPVRPDQ) has biased composition (basic and acidic residues). T912 carries the post-translational modification Phosphothreonine. Residue K920 forms a Glycyl lysine isopeptide (Lys-Gly) (interchain with G-Cter in SUMO2) linkage. A disordered region spans residues 927–1017 (STPIGISNYP…GSTAIAEPVA (91 aa)). Polar residues predominate over residues 935–949 (YPESTIATSDVTSES). A compositionally biased stretch (basic and acidic residues) spans 961 to 975 (EKGDSESAPEMDGKL). S965 carries the post-translational modification Phosphoserine. A Glycyl lysine isopeptide (Lys-Gly) (interchain with G-Cter in SUMO2) cross-link involves residue K974. Position 1018 is a phosphoserine (S1018). Disordered regions lie at residues 1034–1144 (QEKE…MDRP), 1178–1231 (GTST…PHGH), and 1267–1478 (TEET…DSSS). Positions 1060–1074 (EEDKERPDVTPKLRQ) are enriched in basic and acidic residues. Phosphoserine is present on residues S1075 and S1096. The segment covering 1099 to 1112 (SQQRASQEQRASQE) has biased composition (low complexity). S1115 is modified (phosphoserine). Positions 1178–1197 (GTSTAEQNSGKQDATVQTER) are enriched in polar residues. Residue T1211 is modified to Phosphothreonine. Residues S1213 and S1216 each carry the phosphoserine modification. A compositionally biased stretch (acidic residues) spans 1269-1282 (ETEEPIVECQECET). Over residues 1295–1326 (DLGDISSFSSKASSSHHTSSGTSLSAIHSSGS) the composition is skewed to low complexity. The residue at position 1314 (S1314) is a Phosphoserine. R1329 is modified (omega-N-methylarginine). S1339 is subject to Phosphoserine. At R1352 the chain carries Omega-N-methylarginine. S1359 bears the Phosphoserine mark. A Glycyl lysine isopeptide (Lys-Gly) (interchain with G-Cter in SUMO2) cross-link involves residue K1362. At S1365 the chain carries Phosphoserine. The GAR signature appears at 1393 to 1400 (RGRGRRGR). Phosphoserine is present on residues S1423 and S1427. K1431 participates in a covalent cross-link: Glycyl lysine isopeptide (Lys-Gly) (interchain with G-Cter in SUMO1); alternate. K1431 participates in a covalent cross-link: Glycyl lysine isopeptide (Lys-Gly) (interchain with G-Cter in SUMO2); alternate. 4 positions are modified to phosphoserine: S1457, S1459, S1470, and S1471. Low complexity predominate over residues 1469–1478 (GSSDGLDSSS). The interval 1481 to 1600 (NSFVGLRVVA…NRLREQYGLG (120 aa)) is tudor-like. Residues 1492-1520 (WSSNGYFYSGKITRDVGAGKYKLLFDDGY) form an interaction with dimethylated histone H4 region. A Glycyl lysine isopeptide (Lys-Gly) (interchain with G-Cter in SUMO1); alternate cross-link involves residue K1560. K1560 participates in a covalent cross-link: Glycyl lysine isopeptide (Lys-Gly) (interchain with G-Cter in SUMO2); alternate. The UDR signature appears at 1601–1628 (PYEAVTPLTKAADISLDNLVEGKRKRRS). T1606 is subject to Phosphothreonine. Phosphoserine is present on residues S1615, S1628, and S1632. Positions 1624–1715 (RKRRSNISSP…IGEPSVLEEP (92 aa)) are disordered. Positions 1631–1648 (SSPVTPTAASSSSTTPTR) are enriched in low complexity. T1635 and T1645 each carry phosphothreonine. Phosphoserine occurs at positions 1653, 1670, and 1675. K1682 is covalently cross-linked (Glycyl lysine isopeptide (Lys-Gly) (interchain with G-Cter in ubiquitin)). Residues S1698 and S1756 each carry the phosphoserine modification. 2 BRCT domains span residues 1749 to 1845 (LDGP…NYLL) and 1861 to 1961 (PREN…QHPK).

As to quaternary structure, homoligomer. Interacts with p53/TP53 (via the central domain). Interacts with DCLRE1C. Interacts with histone H2AX and this requires phosphorylation of H2AX on 'Ser-139'. Interacts with histone H4 that has been dimethylated at 'Lys-20' (H4K20me2). Has low affinity for histone H4 containing monomethylated 'Lys-20' (H4K20me1). Does not bind histone H4 containing unmethylated or trimethylated 'Lys-20' (H4K20me3). Has low affinity for histone H3 that has been dimethylated on 'Lys-79'. Has very low affinity for histone H3 that has been monomethylated on 'Lys-79' (in vitro). Does not bind unmethylated histone H3. Interacts with histone H2A monoubiquitinated at 'Lys-15' (H2AK15Ub). Interacts with PWWP3A/EXPAND1. Interacts with CHEK2; modulates CHEK2 phosphorylation at 'Thr-68' in response to infrared. Interacts with MSL1; this interaction may be required for MSL1 DNA repair activity, but not for histone acetyltransferase activity. Interacts (when phosphorylated by ATM) with RIF1. Interacts (via the Tudor-like domain) with NUDT16L1/TIRR; interaction masks the Tudor-like domain and prevents recruitment to chromatin. Interacts with PAXIP1. Interacts with IFI202A. Interacts with SHLD2. Interacts (when phosphorylated) with TOPBP1. Interacts with GFI1; promoting methylation by PRMT1. Interacts with (phosphorylated) DYNLL1; specifically binds DYNLL1 phosphorylated at 'Ser-88' and promotes its recruitment to double stand breaks (DSBs). Post-translationally, phosphorylated at basal level in the absence of DNA damage. Phosphorylated by ATM in response to DNA damage: phosphorylation at different sites promotes interaction with different set of proteins: phosphorylation at the N-terminus by ATM (residues from 11-181) promotes interaction with PAXIP1 and non-homologous end joining (NHEJ) of dysfunctional telomeres. Phosphorylation by ATM at residues that are located more C-terminus (residues 300-650) leads to promote interaction with RIF1. Interaction with RIF1 leads to disrupt interaction with NUDT16L1/TIRR. Phosphorylation at Thr-1606 and Ser-1615 in the UDR motif blocks interaction with H2AK15ub. Dephosphorylated by PPP4C. Hyperphosphorylation during mitosis correlates with its exclusion from chromatin and DNA lesions. Hyperphosphorylated in an ATR-dependent manner in response to DNA damage induced by UV irradiation. Dephosphorylated by PPP5C. Phosphorylation at Ser-368 and Thr-662 promotes interaction with TOPBP1. Phosphorylated by VRK1. In terms of processing, asymmetrically dimethylated on Arg residues by PRMT1. Methylation is required for DNA binding. Monoubiquitinated at Lys-1682 by MSL2 is reponse to DNA damage, leading to its stabilization.

It is found in the nucleus. Its subcellular location is the chromosome. The protein resides in the centromere. It localises to the kinetochore. In terms of biological role, double-strand break (DSB) repair protein involved in response to DNA damage, telomere dynamics and class-switch recombination (CSR) during antibody genesis. Plays a key role in the repair of double-strand DNA breaks (DSBs) in response to DNA damage by promoting non-homologous end joining (NHEJ)-mediated repair of DSBs and specifically counteracting the function of the homologous recombination (HR) repair protein BRCA1. In response to DSBs, phosphorylation by ATM promotes interaction with RIF1 and dissociation from NUDT16L1/TIRR, leading to recruitment to DSBs sites. Recruited to DSBs sites by recognizing and binding histone H2A monoubiquitinated at 'Lys-15' (H2AK15Ub) and histone H4 dimethylated at 'Lys-20' (H4K20me2), two histone marks that are present at DSBs sites. Required for immunoglobulin class-switch recombination (CSR) during antibody genesis, a process that involves the generation of DNA DSBs. Participates in the repair and the orientation of the broken DNA ends during CSR. In contrast, it is not required for classic NHEJ and V(D)J recombination. Promotes NHEJ of dysfunctional telomeres. This chain is TP53-binding protein 1, found in Mus musculus (Mouse).